Here is a 362-residue protein sequence, read N- to C-terminus: 45 kDa calcium-binding protein (362 aa).

The first 36 residues, 1–36 (MVWPWVAMASRWGPLIGLAPCCLWLLGAVLLMDASA), serve as a signal peptide directing secretion. Asparagine 40 is a glycosylation site (N-linked (GlcNAc...) asparagine). 2 consecutive EF-hand domains span residues 98-133 (RSRR…KTAE) and 137-172 (EAME…SKGH). Serine 99 carries the phosphoserine modification. Ca(2+) contacts are provided by aspartate 111, asparagine 113, aspartate 115, lysine 117, glutamate 122, aspartate 150, aspartate 152, aspartate 154, histidine 156, and glutamate 161. Residue threonine 193 is modified to Phosphothreonine. EF-hand domains follow at residues 197–232 (LENL…HSRG), 233–268 (MLRF…TVEN), 278–313 (WVKD…MNEY), and 314–349 (NALN…FTGS). Aspartate 213 is a Ca(2+) binding site. A Phosphothreonine modification is found at threonine 217. 6 residues coordinate Ca(2+): glutamate 220, aspartate 246, aspartate 248, aspartate 250, glutamine 252, and glutamate 257. The residue at position 265 (threonine 265) is a Phosphothreonine. 3 residues coordinate Ca(2+): aspartate 291, asparagine 293, and aspartate 295. Residue threonine 299 is modified to Phosphothreonine. Ca(2+)-binding residues include glutamate 302, aspartate 327, asparagine 329, asparagine 331, histidine 333, and glutamate 338. The interval 309–362 (PMNEYNALNEAKQMIAVADENQNHHLEPEEVLKYSEFFTGSKLVDYARSVHEEF) is necessary for intracellular retention in Golgi apparatus lumen.

Belongs to the CREC family. Isoform 5 interacts with STXBP1; the interaction is enhanced in presence of calcium. Isoform 5 interacts with STX3. Ubiquitous. Isoform 5 is expressed in pancreas.

The protein resides in the golgi apparatus lumen. It is found in the cytoplasm. Its subcellular location is the cell membrane. The protein localises to the cell projection. It localises to the bleb. Its function is as follows. May regulate calcium-dependent activities in the endoplasmic reticulum lumen or post-ER compartment. Functionally, isoform 5 may be involved in the exocytosis of zymogens by pancreatic acini. In Homo sapiens (Human), this protein is 45 kDa calcium-binding protein (SDF4).